Here is a 204-residue protein sequence, read N- to C-terminus: Small ribosomal subunit protein uS7 (204 aa).

The protein belongs to the universal ribosomal protein uS7 family. In terms of assembly, part of the 30S ribosomal subunit.

One of the primary rRNA binding proteins, it binds directly to 16S rRNA where it nucleates assembly of the head domain of the 30S subunit. Is located at the subunit interface close to the decoding center. This is Small ribosomal subunit protein uS7 from Methanoregula boonei (strain DSM 21154 / JCM 14090 / 6A8).